Reading from the N-terminus, the 108-residue chain is Competence protein ComGC (108 aa).

Positions 1–13 (MKKMMTFLKKAKV) are cleaved as a signal peptide. The tract at residues 14 to 39 (KAFTLVEMLVVLLIISVLFLLFVPNL) is may be involved in polymerization of ComGC. F16 is subject to N-methylphenylalanine. The chain crosses the membrane as a helical span at residues 16-36 (FTLVEMLVVLLIISVLFLLFV).

It belongs to the ComGC family. As to quaternary structure, the transformation pili are flexible filaments, consisting mainly of the major pilin ComGC and smaller amounts of the minor pilins, including at least ComGD, ComGF and ComGG, and perhaps ComGE. Homodimer. Forms higher-order multimers. Interacts with ComGG; the interaction is probably direct. In terms of processing, undergoes proteolytic cleavage.

Its subcellular location is the cell membrane. The protein resides in the cell surface. The protein localises to the fimbrium. It localises to the secreted. Its function is as follows. Major component of the type IV-like pilus (T4P) that plays a role in transformation. Transformation pili are dynamically extended and retracted, perhaps thereby promoting DNA uptake and transformation. Required for transformation. Required for DNA binding. The sequence is that of Competence protein ComGC from Streptococcus pneumoniae (strain ATCC BAA-255 / R6).